Here is a 365-residue protein sequence, read N- to C-terminus: Sulfotransferase 2B1 (365 aa).

70-75 (KSGTTW) provides a ligand contact to 3'-phosphoadenylyl sulfate. Substrate-binding residues include Trp-98, Trp-103, and His-125. The active-site Proton acceptor is His-125. Residues Arg-147, Ser-155, Tyr-210, 244 to 249 (STFSAM), and 274 to 276 (RKG) each bind 3'-phosphoadenylyl sulfate. The interval 303–365 (GMPTFPWDED…ASETPHPRPS (63 aa)) is disordered. Acidic residues predominate over residues 309–325 (WDEDPEEDGSPDPEPSP). Ser-348 is subject to Phosphoserine.

The protein belongs to the sulfotransferase 1 family. Post-translationally, phosphorylated. Expressed in the stratum granulosum-stratum corneum junction in the skin (at protein level). Expressed highly in placenta, prostate and trachea and lower expression in the small intestine and lung.

The protein resides in the cytoplasm. The protein localises to the cytosol. It localises to the microsome. It is found in the nucleus. The enzyme catalyses an alcohol + 3'-phosphoadenylyl sulfate = an alkyl sulfate + adenosine 3',5'-bisphosphate + H(+). The catalysed reaction is 3beta-hydroxyandrost-5-en-17-one + 3'-phosphoadenylyl sulfate = dehydroepiandrosterone 3-sulfate + adenosine 3',5'-bisphosphate + H(+). It catalyses the reaction (24S)-hydroxycholesterol + 3'-phosphoadenylyl sulfate = (24S)-hydroxycholesterol 3-sulfate + adenosine 3',5'-bisphosphate + H(+). It carries out the reaction cholesterol + 3'-phosphoadenylyl sulfate = cholesterol sulfate + adenosine 3',5'-bisphosphate + H(+). The enzyme catalyses pregnenolone + 3'-phosphoadenylyl sulfate = pregnenolone sulfate + adenosine 3',5'-bisphosphate + H(+). Functionally, sulfotransferase that utilizes 3'-phospho-5'-adenylyl sulfate (PAPS) as sulfonate donor to catalyze the sulfate conjugation. Responsible for the sulfation of cholesterol. Catalyzes sulfation of the 3beta-hydroxyl groups of steroids, such as, pregnenolone and dehydroepiandrosterone (DHEA). Preferentially sulfonates cholesterol, while it also has significant activity with pregnenolone and DHEA. Plays a role in epidermal cholesterol metabolism and in the regulation of epidermal proliferation and differentiation. Sulfonates pregnenolone but not cholesterol. This is Sulfotransferase 2B1 (SULT2B1) from Homo sapiens (Human).